The sequence spans 697 residues: PAN2-PAN3 deadenylation complex subunit PAN3 (697 aa).

A C3H1-type zinc finger spans residues 7 to 36 (TAKDTLCKNILIYGYCKYENKGCAFSHNRQ). The interval 40-67 (QQQQATNTSNNSTSVITPNSANSTASSA) is disordered. 2 consecutive short sequence motifs (PABPC-interacting motif-2 (PAM-2)) follow at residues 69-89 (LSSK…VSNL) and 106-126 (FKPE…TQRP). The interval 106–240 (FKPENGVSEP…SAPTPGSETP (135 aa)) is disordered. The span at 119 to 153 (DSPTTQRPFTSKRFNVSTPSFTPTNFDFANNSNAD) shows a compositional bias: polar residues. A compositionally biased stretch (low complexity) spans 172 to 187 (QNQQQQQQQQQQQQKQ). Positions 212–224 (GVSQSSPSTNPYF) are enriched in polar residues. Positions 308-576 (QSLSHSNLPE…DLNEFSQRLT (269 aa)) are pseudokinase domain. ATP contacts are provided by residues Arg-361, 416–423 (DYYPNSIS), and 470–471 (SK). The stretch at 577–615 (PKMFNIIDSLQNSSDFIEGQLTSELENARLFRLMTKLNY) forms a coiled coil. Positions 616–697 (LIHDNSNSEN…IDTKFRLMRE (82 aa)) are knob domain.

It belongs to the protein kinase superfamily. PAN3 family. In terms of assembly, homodimer. Forms a heterotrimer with a catalytic subunit PAN2 to form the poly(A)-nuclease (PAN) deadenylation complex. Interacts (via PAM-2 motif) with poly(A)-binding protein PAB1 (via PABC domain), conferring substrate specificity of the enzyme complex.

Its subcellular location is the cytoplasm. Functionally, regulatory subunit of the poly(A)-nuclease (PAN) deadenylation complex, one of two cytoplasmic mRNA deadenylases involved in mRNA turnover. PAN specifically shortens poly(A) tails of RNA and the activity is stimulated by poly(A)-binding protein PAB1. PAN deadenylation is followed by rapid degradation of the shortened mRNA tails by the CCR4-NOT complex. Deadenylated mRNAs are then degraded by two alternative mechanisms, namely exosome-mediated 3'-5' exonucleolytic degradation, or deadenylation-dependent mRNA decaping and subsequent 5'-3' exonucleolytic degradation by XRN1. May also be involved in post-transcriptional maturation of mRNA poly(A) tails. PAN3 acts as a positive regulator for PAN activity, recruiting the catalytic subunit PAN2 to mRNA via its interaction with RNA and with PAB1. The chain is PAN2-PAN3 deadenylation complex subunit PAN3 from Candida albicans (strain SC5314 / ATCC MYA-2876) (Yeast).